A 128-amino-acid polypeptide reads, in one-letter code: Keratin-associated protein 2-1 (128 aa).

The 10 X 5 AA repeats of C-C-[CDPQRWG]-[APRS]-[CIPSTVD] stretch occupies residues 5-112; the sequence is CCGSTFSSLS…SVQSPCCRPP (108 aa).

The protein belongs to the KRTAP type 2 family. In terms of assembly, interacts with hair keratins.

In the hair cortex, hair keratin intermediate filaments are embedded in an interfilamentous matrix, consisting of hair keratin-associated proteins (KRTAP), which are essential for the formation of a rigid and resistant hair shaft through their extensive disulfide bond cross-linking with abundant cysteine residues of hair keratins. The matrix proteins include the high-sulfur and high-glycine-tyrosine keratins. The chain is Keratin-associated protein 2-1 (KRTAP2-1) from Homo sapiens (Human).